Reading from the N-terminus, the 267-residue chain is Dihydropteroate synthase (267 aa).

The Pterin-binding domain occupies 1–251 (MTKTKIMGIL…NVELNAKLAK (251 aa)). Asparagine 11 is a Mg(2+) binding site. Residues threonine 51, aspartate 84, asparagine 103, aspartate 167, lysine 203, and 239 to 241 (RVH) contribute to the (7,8-dihydropterin-6-yl)methyl diphosphate site.

The protein belongs to the DHPS family. In terms of assembly, homodimer. Mg(2+) serves as cofactor.

It catalyses the reaction (7,8-dihydropterin-6-yl)methyl diphosphate + 4-aminobenzoate = 7,8-dihydropteroate + diphosphate. Its pathway is cofactor biosynthesis; tetrahydrofolate biosynthesis; 7,8-dihydrofolate from 2-amino-4-hydroxy-6-hydroxymethyl-7,8-dihydropteridine diphosphate and 4-aminobenzoate: step 1/2. Functionally, catalyzes the condensation of para-aminobenzoate (pABA) with 6-hydroxymethyl-7,8-dihydropterin diphosphate (DHPt-PP) to form 7,8-dihydropteroate (H2Pte), the immediate precursor of folate derivatives. The protein is Dihydropteroate synthase (folP) of Staphylococcus aureus (strain MSSA476).